The chain runs to 229 residues: Methyltransferase ctvB (229 aa).

It belongs to the methyltransferase superfamily.

It functions in the pathway mycotoxin biosynthesis. Its function is as follows. Methyltransferase; part of the gene cluster that mediates the biosynthesis of citreoviridin, an inhibitor of the of F1-ATPase beta-subunit. The HR-PKS ctvA accepts acetyl-CoA as the starter unit and catalyzes eight iterations of malonyl-CoA extension and four iterations of SAM-dependent methylation at C4, C12, C14, and C16. The KR and DH domains selectively act on the first six iterations to generate the hexaene chain. In the last three iterations, the KR and DH domains terminate their functions to yield a beta,delta-diketo ester moiety, which then undergoes intramolecular cyclization to yield an alpha-pyrone intermediate. Subsequently, ctvB methylates the alpha-pyrone hydroxyl group to generate citreomontanin. In order to form the tetrahydrofuran ring with the correct stereochemistry, the terminal alkenes of citreomontanin need to undergo isomerization to yield a (17Z)-hexaene, a step that could be catalyzed by ctvC. The (17Z)-hexaene then undergoes bisepoxidation by ctvC to form a (17R,16R,15S,14R)-bisepoxide moiety. Lastly, ctvD acts as a regioselective hydrolase to form the tetrahydrofuran ring with the substituents in the correct absolute configuration, completing the biosynthesis of citreoviridin. The sequence is that of Methyltransferase ctvB from Aspergillus terreus (strain NIH 2624 / FGSC A1156).